Reading from the N-terminus, the 247-residue chain is Pyrroloquinoline-quinone synthase (247 aa).

This sequence belongs to the PqqC family.

The catalysed reaction is 6-(2-amino-2-carboxyethyl)-7,8-dioxo-1,2,3,4,7,8-hexahydroquinoline-2,4-dicarboxylate + 3 O2 = pyrroloquinoline quinone + 2 H2O2 + 2 H2O + H(+). The protein operates within cofactor biosynthesis; pyrroloquinoline quinone biosynthesis. Ring cyclization and eight-electron oxidation of 3a-(2-amino-2-carboxyethyl)-4,5-dioxo-4,5,6,7,8,9-hexahydroquinoline-7,9-dicarboxylic-acid to PQQ. The chain is Pyrroloquinoline-quinone synthase from Rhizobium rhizogenes (strain K84 / ATCC BAA-868) (Agrobacterium radiobacter).